We begin with the raw amino-acid sequence, 177 residues long: O-acetyl-ADP-ribose deacetylase (177 aa).

Positions 1-175 (MKTRIHVVQG…LYERLLTQQG (175 aa)) constitute a Macro domain. Residues 11–12 (DI), Asn-25, 33–35 (GVD), and 122–126 (STGVY) each bind substrate. Residue Asp-35 is the Proton acceptor of the active site.

Belongs to the MacroD-type family. YmdB subfamily. Homodimer. Interacts with RNase III.

It carries out the reaction 3''-O-acetyl-ADP-D-ribose + H2O = ADP-D-ribose + acetate + H(+). The catalysed reaction is 2''-O-acetyl-ADP-D-ribose + H2O = ADP-D-ribose + acetate + H(+). Its function is as follows. Deacetylates O-acetyl-ADP ribose to yield ADP-ribose and free acetate. Down-regulates ribonuclease 3 (RNase III) activity. Acts by interacting directly with the region of the ribonuclease that is required for dimerization/activation. The polypeptide is O-acetyl-ADP-ribose deacetylase (Shigella dysenteriae serotype 1 (strain Sd197)).